We begin with the raw amino-acid sequence, 302 residues long: Sulfate adenylyltransferase subunit 2 (302 aa).

This sequence belongs to the PAPS reductase family. CysD subfamily. In terms of assembly, heterodimer composed of CysD, the smaller subunit, and CysN.

It carries out the reaction sulfate + ATP + H(+) = adenosine 5'-phosphosulfate + diphosphate. Its pathway is sulfur metabolism; hydrogen sulfide biosynthesis; sulfite from sulfate: step 1/3. In terms of biological role, with CysN forms the ATP sulfurylase (ATPS) that catalyzes the adenylation of sulfate producing adenosine 5'-phosphosulfate (APS) and diphosphate, the first enzymatic step in sulfur assimilation pathway. APS synthesis involves the formation of a high-energy phosphoric-sulfuric acid anhydride bond driven by GTP hydrolysis by CysN coupled to ATP hydrolysis by CysD. This is Sulfate adenylyltransferase subunit 2 from Salmonella arizonae (strain ATCC BAA-731 / CDC346-86 / RSK2980).